Consider the following 381-residue polypeptide: Endophilin-A homolog (381 aa).

The segment at 1–21 (MSLSGLRKQFNKANQYLSETM) is membrane-binding amphipathic helix. One can recognise a BAR domain in the interval 18 to 247 (SETMGAAEPT…LGHRIKDAAA (230 aa)). The stretch at 170 to 238 (CKKRQQRRDD…QCLENLQQQL (69 aa)) forms a coiled coil. The tract at residues 246 to 323 (AARPREEHVP…PPPLSQQQKP (78 aa)) is disordered. A compositionally biased stretch (polar residues) spans 260 to 271 (ANESRTPRSSFR). Residues 305-317 (YQGPPPGGLPPPL) show a composition bias toward pro residues. Positions 320–379 (QQKPQCRALFDFDAQSEGELDFKEGTLIELVSQIDENWYEGRVNGKTGLFPVTYVQVLVP) constitute an SH3 domain.

This sequence belongs to the endophilin family. In terms of assembly, may form a homodimer (via the BAR domain). As to expression, expressed in neurons and posterior intestine.

Its subcellular location is the synapse. The protein localises to the cytoplasmic vesicle. It localises to the secretory vesicle. The protein resides in the synaptic vesicle. It is found in the membrane. Its function is as follows. Involved in synaptic vesicle (SV) recycling in neurons probably by regulating clathrin-mediated endocytosis. By controlling SV endocytosis, regulates the rate of excitatory postsynaptic currents (EPSCs) at neuromuscular junctions and thus locomotion. In a similar manner, involved in necrotic neuronal cell death induced by abnormal hyperactivation of ion channels. Plays a minor role in responses to mechanical stimuli. Plays a minor role in unc-26/synaptojanin localization to synapses. The chain is Endophilin-A homolog from Caenorhabditis elegans.